The sequence spans 1206 residues: uncharacterized protein (1206 aa).

3 disordered regions span residues 133–547 (YDLD…PVDY), 568–837 (FASS…DQLL), and 859–1206 (RQRA…KATS). Composition is skewed to pro residues over residues 139-151 (IPPP…PGPP) and 159-234 (GESP…PPAP). Position 255 is a phosphoserine (serine 255). Over residues 305-319 (VRTSSIPVQEAPGAS) the composition is skewed to low complexity. Residues 351-363 (RALEPEQPREPRP) show a composition bias toward basic and acidic residues. Pro residues predominate over residues 384–413 (APPPAPPLPPPAPPLPPPAPSLPPAAPPLP). Over residues 414 to 436 (STELAAPPSSGFMKTSKSNSPAL) the composition is skewed to low complexity. Residues 454–467 (VDWRDPRQMEKLRS) show a composition bias toward basic and acidic residues. A compositionally biased stretch (low complexity) spans 522 to 531 (PEKSPSSSSL). A compositionally biased stretch (basic and acidic residues) spans 568-577 (FASSAEKEAK). A compositionally biased stretch (low complexity) spans 656–671 (LPKATPGLTLPLKPTP). Phosphothreonine is present on threonine 680. Basic and acidic residues predominate over residues 732-747 (AEKDLASVRQREKPET). A compositionally biased stretch (pro residues) spans 1001-1016 (IPPPPEFSNDPEPPAP). Residues 1028–1041 (PRNNFSDLGQSWGP) are compositionally biased toward polar residues. Omega-N-methylarginine occurs at positions 1051, 1083, and 1094. Positions 1170-1184 (PHGNTHYGSPINTFT) are enriched in polar residues.

This is an uncharacterized protein from Mus musculus (Mouse).